The following is a 442-amino-acid chain: D-serine dehydratase (442 aa).

Lysine 118 bears the N6-(pyridoxal phosphate)lysine mark.

This sequence belongs to the serine/threonine dehydratase family. DsdA subfamily. Monomer. Requires pyridoxal 5'-phosphate as cofactor.

The enzyme catalyses D-serine = pyruvate + NH4(+). This is D-serine dehydratase from Escherichia coli O139:H28 (strain E24377A / ETEC).